Here is a 179-residue protein sequence, read N- to C-terminus: Bifunctional protein PyrR (179 aa).

A PRPP-binding motif is present at residues 100–112; it reads VILVDDVLFTGRT.

Belongs to the purine/pyrimidine phosphoribosyltransferase family. PyrR subfamily. In terms of assembly, homodimer and homohexamer; in equilibrium.

It carries out the reaction UMP + diphosphate = 5-phospho-alpha-D-ribose 1-diphosphate + uracil. In terms of biological role, regulates transcriptional attenuation of the pyrimidine nucleotide (pyr) operon by binding in a uridine-dependent manner to specific sites on pyr mRNA. This disrupts an antiterminator hairpin in the RNA and favors formation of a downstream transcription terminator, leading to a reduced expression of downstream genes. Functionally, also displays a weak uracil phosphoribosyltransferase activity which is not physiologically significant. This is Bifunctional protein PyrR from Geobacillus thermodenitrificans (strain NG80-2).